Here is a 229-residue protein sequence, read N- to C-terminus: Endonuclease V (229 aa).

It belongs to the endonuclease V family.

The protein localises to the cytoplasm. It carries out the reaction Endonucleolytic cleavage at apurinic or apyrimidinic sites to products with a 5'-phosphate.. Functionally, DNA repair enzyme involved in the repair of deaminated bases. Selectively cleaves double-stranded DNA at the second phosphodiester bond 3' to a deoxyinosine leaving behind the intact lesion on the nicked DNA. In Methanopyrus kandleri (strain AV19 / DSM 6324 / JCM 9639 / NBRC 100938), this protein is Endonuclease V.